Consider the following 208-residue polypeptide: MTGKKRSASSSRWLQEHFSDKYVQQAQKKGLRSRAWFKLDEIQQSDKLFKPGMTVVDLGAAPGGWSQYVVTQIGGKGRIIACDLLPMDPIVGVDFLQGDFRDELVMKALLERVGDSKVQVVMSDMAPNMSGTPAVDIPRAMYLVELALDMCRDVLAPGGSFVVKVFQGEGFDEYLREIRSLFTKVKVRKPDSSRARSREVYIVATGRK.

Residues Gly-63, Trp-65, Asp-83, Asp-99, and Asp-124 each contribute to the S-adenosyl-L-methionine site. The Proton acceptor role is filled by Lys-164.

Belongs to the class I-like SAM-binding methyltransferase superfamily. RNA methyltransferase RlmE family.

It localises to the cytoplasm. The catalysed reaction is uridine(2552) in 23S rRNA + S-adenosyl-L-methionine = 2'-O-methyluridine(2552) in 23S rRNA + S-adenosyl-L-homocysteine + H(+). Specifically methylates the uridine in position 2552 of 23S rRNA at the 2'-O position of the ribose in the fully assembled 50S ribosomal subunit. This is Ribosomal RNA large subunit methyltransferase E from Salmonella typhi.